The chain runs to 521 residues: Matrix metalloproteinase-A (521 aa).

The first 21 residues, 1–21, serve as a signal peptide directing secretion; sequence MFTGLHDILIILFLLVTLKIA. Positions 22–95 are cleaved as a propeptide — activation peptide; that stretch reads QNVDHTKFLQ…EDHQKSRGKR (74 aa). The short motif at 78–85 is the Cysteine switch element; it reads PRCGHPDV. C80 serves as a coordination point for Zn(2+). The Extracellular segment spans residues 96–500; sequence YAPPQFKWKE…FCPRNEKLVL (405 aa). N-linked (GlcNAc...) asparagine glycosylation occurs at N199. H215 lines the Zn(2+) pocket. E216 is an active-site residue. 2 residues coordinate Zn(2+): H219 and H225. The segment at 259–298 is disordered; the sequence is KASKKENEEEERKTENEDKRRKTEKDRGRTREHESDDIRP. Positions 261–298 are enriched in basic and acidic residues; the sequence is SKKENEEEERKTENEDKRRKTEKDRGRTREHESDDIRP. Hemopexin repeat units lie at residues 300-347, 391-443, and 444-492; these read ECRV…FPGL, EKYV…WARV, and PKGV…FGFC. N469 is a glycosylation site (N-linked (GlcNAc...) asparagine). A helical membrane pass occupies residues 501 to 521; it reads NSSSSHFSLIYATITILILIF.

This sequence belongs to the peptidase M10A family. The cofactor is Zn(2+). As to expression, expressed in the anchor cell. Expressed in the anchor cell throughout the L3 and the early L4 stage, but not in vulva precursor cells P6.p, P6.px, or P6.pxx. Expression in P6.pxxx cells begins in late-L4 stage. During L4 lethargus, expressed in all four vulE cells, but not in vulF cells. The expression in vulE cells persists in adulthood. In males, expressed in the linker cell (LC) from the early L4 stage until LC death during the L4-to-adult molt.

The protein localises to the cell membrane. It is found in the basolateral cell membrane. Its function is as follows. Metalloprotease which, together with cadherin cdh-3 and hemicentin him-4, plays a role in anchor cell (AC) invasion during postembryonic vulval development probably by promoting the degradation of the basement membrane separating the gonad from the vulva epithelium. This Caenorhabditis elegans protein is Matrix metalloproteinase-A.